A 206-amino-acid chain; its full sequence is Lipid A acyltransferase PagP (206 aa).

Positions methionine 1–alanine 22 are cleaved as a signal peptide. Positions valine 26–alanine 46 are enriched in low complexity. A disordered region spans residues valine 26–alanine 50. Active-site residues include histidine 80, aspartate 123, and serine 124.

Belongs to the lipid A palmitoyltransferase family. As to quaternary structure, homodimer.

The protein localises to the cell outer membrane. The enzyme catalyses a lipid A + a 1,2-diacyl-sn-glycero-3-phosphocholine = a hepta-acyl lipid A + a 2-acyl-sn-glycero-3-phosphocholine. It catalyses the reaction a lipid IVA + a 1,2-diacyl-sn-glycero-3-phosphocholine = a lipid IVB + a 2-acyl-sn-glycero-3-phosphocholine. The catalysed reaction is a lipid IIA + a 1,2-diacyl-sn-glycero-3-phosphocholine = a lipid IIB + a 2-acyl-sn-glycero-3-phosphocholine. Functionally, transfers a fatty acid residue from the sn-1 position of a phospholipid to the N-linked hydroxyfatty acid chain on the proximal unit of lipid A or its precursors. The protein is Lipid A acyltransferase PagP of Laribacter hongkongensis (strain HLHK9).